Here is a 1441-residue protein sequence, read N- to C-terminus: Cleavage and polyadenylation specificity factor subunit 1 (1441 aa).

4 disordered regions span residues 404 to 435, 545 to 569, 713 to 775, and 899 to 921; these read PASS…GGKT, EEET…DGRR, GGAR…PAPF, and FREK…EGSG. The span at 410-419 shows a compositional bias: basic and acidic residues; it reads EAADKEEPPS. Serine 754 and serine 764 each carry phosphoserine. Over residues 756 to 773 the composition is skewed to basic and acidic residues; that stretch reads SKEEARRSSQPPADRDPA.

This sequence belongs to the CPSF1 family. As to quaternary structure, component of the cleavage and polyadenylation specificity factor (CPSF) complex, composed of CPSF1, CPSF2, CPSF3, CPSF4 and FIP1L1. Found in a complex with CPSF1, FIP1L1 and PAPOLA. Interacts with FIP1L1 and SRRM1. Interacts with TUT1; the interaction is direct and mediates the recruitment of the CPSF complex on the 3'UTR of selected pre-mRNAs. Interacts with TENT2/GLD2.

It localises to the nucleus. It is found in the nucleoplasm. Functionally, component of the cleavage and polyadenylation specificity factor (CPSF) complex that plays a key role in pre-mRNA 3'-end formation, recognizing the AAUAAA signal sequence and interacting with poly(A) polymerase and other factors to bring about cleavage and poly(A) addition. This subunit is involved in the RNA recognition step of the polyadenylation reaction. May play a role in eye morphogenesis and the development of retinal ganglion cell projections to the midbrain. In Mus musculus (Mouse), this protein is Cleavage and polyadenylation specificity factor subunit 1 (Cpsf1).